Here is a 127-residue protein sequence, read N- to C-terminus: Small ribosomal subunit protein uS11 (127 aa).

It belongs to the universal ribosomal protein uS11 family. As to quaternary structure, part of the 30S ribosomal subunit. Interacts with proteins S7 and S18. Binds to IF-3.

Located on the platform of the 30S subunit, it bridges several disparate RNA helices of the 16S rRNA. Forms part of the Shine-Dalgarno cleft in the 70S ribosome. This is Small ribosomal subunit protein uS11 from Chlorobium phaeobacteroides (strain BS1).